The following is a 731-amino-acid chain: Small conductance calcium-activated potassium channel protein 3 (731 aa).

Positions 1–11 are enriched in basic and acidic residues; sequence MDTSGHFHDSG. 2 disordered regions span residues 1 to 170 and 239 to 258; these read MDTS…SNPF and ATHN…FPKA. Over residues 30–40 the composition is skewed to low complexity; the sequence is QQQQQQQQQQQ. Residues 41 to 51 are compositionally biased toward pro residues; the sequence is QPPPPAPPAAP. Residues 52–95 show a composition bias toward low complexity; the sequence is QQPLGPSLQPQPPQLQQQQQQQQQQQQQQPPHPLSQLAQLQSQP. Residues 112–132 show a composition bias toward polar residues; the sequence is PSSNSTAILHPSSRQGSQLNL. Over residues 138–147 the composition is skewed to low complexity; that stretch reads GHSPSSTATS. Position 167 is a phosphoserine (Ser167). Residues 239–256 are compositionally biased toward polar residues; it reads ATHNHQHAGTTASSTTFP. A helical transmembrane segment spans residues 288-308; that stretch reads LIFGMFGIVVMVIETELSWGL. Residues 315 to 335 traverse the membrane as a helical segment; that stretch reads FSLALKCLISLSTIILLGLII. A helical transmembrane segment spans residues 366 to 386; it reads ISLEMLVCAIHPIPGEYKFFW. A helical membrane pass occupies residues 405–425; that stretch reads IILSIPMFLRLYLIARVMLLH. The chain crosses the membrane as a helical span at residues 454–474; that stretch reads LMTICPGTVLLVFSISLWIIA. The segment at residues 494-514 is an intramembrane region (pore-forming); that stretch reads FLGAMWLISITFLSIGYGDMV. A helical membrane pass occupies residues 523–543; the sequence is VCLLTGIMGAGCTALVVAVVA. Positions 561 to 637 are calmodulin-binding; the sequence is DTQLTKRIKN…LVDLSKMQNV (77 aa). The stretch at 642–669 forms a coiled coil; the sequence is ITELNDRSEDLEKQIGSLESKLEHLTAS. Positions 709–731 are disordered; the sequence is ISDSPIGVSSTSFPTPYTSSSSC. A compositionally biased stretch (low complexity) spans 717–731; that stretch reads SSTSFPTPYTSSSSC.

It belongs to the potassium channel KCNN family. KCa2.3/KCNN3 subfamily. Homodimer. Heteromultimer with KCNN2 or KCNN1; this modulates plasma membrane expression and consequently the small conductance calcium-activated potassium channel activity. The complex is composed of 4 channel subunits each of which binds to a calmodulin subunit which regulates the channel activity through calcium-binding. Interacts with CALM1. As to expression, widely distributed in human tissues and is present at 20-60% of KCNN3 in the brain.

The protein resides in the cell membrane. Its subcellular location is the cytoplasm. It is found in the myofibril. The protein localises to the sarcomere. It localises to the z line. The enzyme catalyses K(+)(in) = K(+)(out). Its activity is regulated as follows. Inhibited by bee venom neurotoxin apamin. Functionally, small conductance calcium-activated potassium channel that mediates the voltage-independent transmembrane transfer of potassium across the cell membrane through a constitutive interaction with calmodulin which binds the intracellular calcium allowing its opening. The current is characterized by a voltage-independent activation, an intracellular calcium concentration increase-dependent activation and a single-channel conductance of 10 picosiemens. Also presents an inwardly rectifying current, thus reducing its already small outward conductance of potassium ions, which is particularly the case when the membrane potential displays positive values, above + 20 mV. Activation is followed by membrane hyperpolarization. Thought to regulate neuronal excitability by contributing to the slow component of synaptic afterhyperpolarization. In terms of biological role, does not function as a small conductance calcium-activated potassium channel. Selectively suppresses endogenous KCNN3 currents, in a dominant-negative fashion by decreasing the abundance of functional channels in the plasma membrane, possibly by selectively coassembling with and sequestering native KCNN3 protein in intracellular compartments. This dominant inhibitory effect extends to other members of the SK subfamily. In Homo sapiens (Human), this protein is Small conductance calcium-activated potassium channel protein 3.